Consider the following 116-residue polypeptide: MFITKCSLHLKSFDLDVLKDSCALILKNKINLQNLKLTGPINLPTKIKKITVLRSPHIDKKSREQFEIRTYTKTIQIESLTKNTNDIINFMKQFENSFFFGLNIKVVFTYKKDVLL.

The protein belongs to the universal ribosomal protein uS10 family.

The protein resides in the mitochondrion. This is Small ribosomal subunit protein uS10m (RPS10) from Reclinomonas americana.